The primary structure comprises 429 residues: Saccharopine dehydrogenase-like oxidoreductase (429 aa).

Ala2 carries the N-acetylalanine modification. The residue at position 217 (Ser217) is a Phosphoserine.

The protein belongs to the saccharopine dehydrogenase family.

The polypeptide is Saccharopine dehydrogenase-like oxidoreductase (SCCPDH) (Homo sapiens (Human)).